The following is a 213-amino-acid chain: ATP phosphoribosyltransferase (213 aa).

The protein belongs to the ATP phosphoribosyltransferase family. Short subfamily. In terms of assembly, heteromultimer composed of HisG and HisZ subunits.

It localises to the cytoplasm. The catalysed reaction is 1-(5-phospho-beta-D-ribosyl)-ATP + diphosphate = 5-phospho-alpha-D-ribose 1-diphosphate + ATP. Its pathway is amino-acid biosynthesis; L-histidine biosynthesis; L-histidine from 5-phospho-alpha-D-ribose 1-diphosphate: step 1/9. In terms of biological role, catalyzes the condensation of ATP and 5-phosphoribose 1-diphosphate to form N'-(5'-phosphoribosyl)-ATP (PR-ATP). Has a crucial role in the pathway because the rate of histidine biosynthesis seems to be controlled primarily by regulation of HisG enzymatic activity. In Listeria welshimeri serovar 6b (strain ATCC 35897 / DSM 20650 / CCUG 15529 / CIP 8149 / NCTC 11857 / SLCC 5334 / V8), this protein is ATP phosphoribosyltransferase.